Here is a 695-residue protein sequence, read N- to C-terminus: HIPL1 protein (695 aa).

Residues methionine 1–alanine 23 form the signal peptide. Residues asparagine 37, asparagine 67, asparagine 107, asparagine 113, asparagine 128, asparagine 151, asparagine 175, asparagine 190, asparagine 208, asparagine 337, asparagine 429, asparagine 511, asparagine 527, asparagine 641, and asparagine 648 are each glycosylated (N-linked (GlcNAc...) asparagine). A lipid anchor (GPI-anchor amidated serine) is attached at serine 665. Positions serine 666–asparagine 695 are cleaved as a propeptide — removed in mature form.

Belongs to the PQQ oxidoreductase GdhB family. The cofactor is pyrroloquinoline quinone.

The protein resides in the cell membrane. The sequence is that of HIPL1 protein (HIPL1) from Arabidopsis thaliana (Mouse-ear cress).